The primary structure comprises 132 residues: Global transcriptional regulator Spx 2 (132 aa).

A disulfide bridge links cysteine 10 with cysteine 13.

The protein belongs to the ArsC family. Spx subfamily. As to quaternary structure, interacts with the C-terminal domain of the alpha subunit of the RNAP.

It localises to the cytoplasm. In terms of biological role, global transcriptional regulator that plays a key role in stress response and exerts either positive or negative regulation of genes. Acts by interacting with the C-terminal domain of the alpha subunit of the RNA polymerase (RNAP). This interaction can enhance binding of RNAP to the promoter region of target genes and stimulate their transcription, or block interaction of RNAP with activator. The sequence is that of Global transcriptional regulator Spx 2 from Lactococcus lactis subsp. lactis (strain IL1403) (Streptococcus lactis).